We begin with the raw amino-acid sequence, 282 residues long: Complement component 1 Q subcomponent-binding protein, mitochondrial (282 aa).

The transit peptide at 1-70 directs the protein to the mitochondrion; sequence MLPLLRCVPR…PRGPCACGCG (70 aa). A C1q binding region spans residues 76 to 93; the sequence is TEGDKAFVDFLNDEIKEE. Lysine 91 carries the post-translational modification N6-acetyllysine. The segment at 137–163 is disordered; sequence NSIPPTFDGEEEPTQGQKVEEQEPELT. Residues 168 to 213 form an interaction with MAVS region; sequence FVVEVIKNDDGKKALVLDCHYPEDEVGQEDEAESDIFSIREVSFQS. A Phosphotyrosine modification is found at tyrosine 188. Serine 201 and serine 205 each carry phosphoserine.

The protein belongs to the MAM33 family. As to quaternary structure, homotrimer; three monomers form a donut-shaped structure with an unusually asymmetric charge distribution on the surface. Interacts with CDK13, HRK, VTN, NFYB, ADRA1B, FOXC1, DDX21, DDX50, NCL, SRSF1 and SRSF9. Interacts with CD93; the association may represent a cell surface C1q receptor. Interacts with KRT1; the association represents a cell surface kininogen receptor. Interacts with CD209; the interaction is indicative for a C1q:C1QBP:CD209 signaling complex. Interacts with FBL and RRP1; the respective interactions with C1QBP are competitive. Probably associates with the mitoribosome. Interacts with MAVS; the interaction occurs upon viral transfection. Interacts with PPIF. Interacts with U2AF1L4. Interacts with PLEKHN1. Interacts with VGF-derived peptide TLQP-21. Interacts with MRE11 and RAD50; forming the MRC (MRE11-RAD50-C1QBP) complex that inhibits the activity of MRE11. In terms of assembly, (Microbial infection) Interacts with Rubella virus capsid protein; the interaction occurs in mitochondria. (Microbial infection) Interacts with L.monocytogenes InlB.

It is found in the mitochondrion matrix. Its subcellular location is the nucleus. The protein resides in the cell membrane. The protein localises to the secreted. It localises to the cytoplasm. It is found in the nucleolus. Multifunctional and multicompartmental protein involved in inflammation and infection processes, ribosome biogenesis, protein synthesis in mitochondria, regulation of apoptosis, transcriptional regulation and pre-mRNA splicing. At the cell surface is thought to act as an endothelial receptor for plasma proteins of the complement and kallikrein-kinin cascades. Putative receptor for C1q; specifically binds to the globular 'heads' of C1q thus inhibiting C1; may perform the receptor function through a complex with C1qR/CD93. In complex with cytokeratin-1/KRT1 is a high affinity receptor for kininogen-1/HMWK. Can also bind other plasma proteins, such as coagulation factor XII leading to its autoactivation. May function to bind initially fluid kininogen-1 to the cell membrane. The secreted form may enhance both extrinsic and intrinsic coagulation pathways. It is postulated that the cell surface form requires docking with transmembrane proteins for downstream signaling which might be specific for a cell-type or response. By acting as C1q receptor is involved in chemotaxis of immature dendritic cells and neutrophils and is proposed to signal through CD209/DC-SIGN on immature dendritic cells, through integrin alpha-4/beta-1 during trophoblast invasion of the decidua, and through integrin beta-1 during endothelial cell adhesion and spreading. Signaling involved in inhibition of innate immune response is implicating the PI3K-AKT/PKB pathway. Required for protein synthesis in mitochondria. In mitochondrial translation may be involved in formation of functional 55S mitoribosomes; the function seems to involve its RNA-binding activity. Acts as a RNA modification reader, which specifically recognizes and binds mitochondrial RNAs modified by C5-methylcytosine (m5C) in response to stress, and promotes recruitment of the mitochondrial degradosome complex, leading to their degradation. May be involved in the nucleolar ribosome maturation process; the function may involve the exchange of FBL for RRP1 in the association with pre-ribosome particles. Involved in regulation of RNA splicing by inhibiting the RNA-binding capacity of SRSF1 and its phosphorylation. Is required for the nuclear translocation of splicing factor U2AF1L4. Involved in regulation of CDKN2A- and HRK-mediated apoptosis. Stabilizes mitochondrial CDKN2A isoform smARF. May be involved in regulation of FOXC1 transcriptional activity and NFY/CCAAT-binding factor complex-mediated transcription. May play a role in antibacterial defense as it can bind to cell surface hyaluronan and inhibit Streptococcus pneumoniae hyaluronate lyase. May be involved in modulation of the immune response; ligation by HCV core protein is resulting in suppression of interleukin-12 production in monocyte-derived dendritic cells. Involved in regulation of antiviral response by inhibiting RIGI- and IFIH1-mediated signaling pathways probably involving its association with MAVS after viral infection. Acts as a regulator of DNA repair via homologous recombination by inhibiting the activity of MRE11: interacts with unphosphorylated MRE11 and RAD50 in absence of DNA damage, preventing formation and activity of the MRN complex. Following DNA damage, dissociates from phosphorylated MRE11, allowing formation of the MRN complex. In terms of biological role, (Microbial infection) During bacterial infection processes acts as an attachment site for microbial proteins, including Listeria monocytogenes internalin B (InlB). The chain is Complement component 1 Q subcomponent-binding protein, mitochondrial (C1QBP) from Chlorocebus aethiops (Green monkey).